Reading from the N-terminus, the 192-residue chain is UPF0301 protein Bamb_0737 (192 aa).

Belongs to the UPF0301 (AlgH) family.

This Burkholderia ambifaria (strain ATCC BAA-244 / DSM 16087 / CCUG 44356 / LMG 19182 / AMMD) (Burkholderia cepacia (strain AMMD)) protein is UPF0301 protein Bamb_0737.